The primary structure comprises 467 residues: Inactive pancreatic lipase-related protein 1 (467 aa).

Residues 1-17 form the signal peptide; the sequence is MLIFWTITLFLLGAAKG. Intrachain disulfides connect C21–C27 and C109–C120. The active-site Nucleophile is the S171. D194 acts as the Charge relay system in catalysis. Positions 205, 208, 210, and 213 each coordinate Ca(2+). C255 and C279 are oxidised to a cystine. H281 (charge relay system) is an active-site residue. 3 disulfides stabilise this stretch: C303/C314, C317/C322, and C451/C467. The PLAT domain maps to 356 to 467; it reads WRYGVSITLS…EDTLLTLTPC (112 aa).

This sequence belongs to the AB hydrolase superfamily. Lipase family. In terms of tissue distribution, pancreas.

It localises to the secreted. Functionally, may function as inhibitor of dietary triglyceride digestion. Lacks detectable lipase activity towards triglycerides, diglycerides, phosphatidylcholine, galactolipids or cholesterol esters (in vitro). This chain is Inactive pancreatic lipase-related protein 1 (PNLIPRP1), found in Homo sapiens (Human).